We begin with the raw amino-acid sequence, 793 residues long: Endonuclease MutS2 (793 aa).

Residue 329–336 (GPNTGGKT) participates in ATP binding. A disordered region spans residues 611–639 (LARARQAVEPTEEEQRARRRGEVPRGLKP). Over residues 623–639 (EEQRARRRGEVPRGLKP) the composition is skewed to basic and acidic residues. The region spanning 717–792 (VDLRGLMVEE…GDGVTVAKLR (76 aa)) is the Smr domain.

It belongs to the DNA mismatch repair MutS family. MutS2 subfamily. Homodimer. Binds to stalled ribosomes, contacting rRNA.

Endonuclease that is involved in the suppression of homologous recombination and thus may have a key role in the control of bacterial genetic diversity. Its function is as follows. Acts as a ribosome collision sensor, splitting the ribosome into its 2 subunits. Detects stalled/collided 70S ribosomes which it binds and splits by an ATP-hydrolysis driven conformational change. Acts upstream of the ribosome quality control system (RQC), a ribosome-associated complex that mediates the extraction of incompletely synthesized nascent chains from stalled ribosomes and their subsequent degradation. Probably generates substrates for RQC. The polypeptide is Endonuclease MutS2 (Symbiobacterium thermophilum (strain DSM 24528 / JCM 14929 / IAM 14863 / T)).